The sequence spans 501 residues: Putative matrix metalloproteinase (501 aa).

An N-terminal signal peptide occupies residues 1-26 (MMPQYERKQIIIHISCVIICVVVTLT). Residues asparagine 48, asparagine 58, asparagine 61, asparagine 94, asparagine 116, and asparagine 163 are each glycosylated (N-linked (GlcNAc...) asparagine; by host). Residue histidine 179 coordinates Zn(2+). The active site involves glutamate 180. 2 residues coordinate Zn(2+): histidine 183 and histidine 189. N-linked (GlcNAc...) asparagine; by host glycosylation is found at asparagine 192, asparagine 267, asparagine 280, and asparagine 291. Residues 311-356 (TGHIDTISVIRGELYIFVDEYHWRFRSNGLLYSGYPLKTTHSWSVP) form a Hemopexin repeat. N-linked (GlcNAc...) asparagine; by host glycans are attached at residues asparagine 379 and asparagine 493.

It belongs to the peptidase M10A family. The cofactor is Zn(2+).

The chain is Putative matrix metalloproteinase from Trichoplusia ni ascovirus 2c (TnAV-2c).